Reading from the N-terminus, the 1065-residue chain is Cellulose synthase A catalytic subunit 3 [UDP-forming] (1065 aa).

Residues 1-260 (MESEGETAGK…PSSRINPYRM (260 aa)) are Cytoplasmic-facing. At serine 3 the chain carries Phosphoserine. Cysteine 20, cysteine 23, cysteine 39, cysteine 42, cysteine 47, cysteine 50, cysteine 62, and cysteine 65 together coordinate Zn(2+). The segment at 20 to 66 (CQICSDNVGKTVDGDRFVACDICSFPVCRPCYEYERKDGNQSCPQCK) adopts an RING-type; degenerate zinc-finger fold. Residues serine 151, serine 211, and serine 216 each carry the phosphoserine modification. Residues 261 to 281 (VIMLRLVILCLFLHYRITNPV) form a helical membrane-spanning segment. Residues 282–283 (PN) lie on the Extracellular side of the membrane. The helical transmembrane segment at 284–304 (AFALWLVSVICEIWFALSWIL) threads the bilayer. At 305–842 (DQFPKWFPVN…LERFAYVNTT (538 aa)) the chain is on the cytoplasmic side. Residues serine 343, lysine 349, glutamate 350, and aspartate 379 each contribute to the UDP-alpha-D-glucose site. Aspartate 379 is a catalytic residue. Residues 433-457 (VKDRRAMKREYEEFKIRINALVSKA) adopt a coiled-coil conformation. Residue lysine 520 coordinates UDP-alpha-D-glucose. The Mn(2+) site is built by lysine 521 and aspartate 545. The tract at residues 643–672 (SKLCGGSRKKNSKAKKESDKKKSGRHTDST) is disordered. A compositionally biased stretch (basic and acidic residues) spans 656-670 (AKKESDKKKSGRHTD). Aspartate 765 is a catalytic residue. Residues 843–863 (IYPITSIPLLMYCTLPAVCLF) traverse the membrane as a helical segment. The Extracellular portion of the chain corresponds to 864–874 (TNQFIIPQISN). Residues 875–895 (IASIWFLSLFLSIFATGILEM) form a helical membrane-spanning segment. At 896–910 (RWSGVGIDEWWRNEQ) the chain is on the cytoplasmic side. A helical transmembrane segment spans residues 911–931 (FWVIGGVSAHLFAVFQGILKV). The Extracellular segment spans residues 932–961 (LAGIDTNFTVTSKASDEDGDFAELYLFKWT). Asparagine 938 is a glycosylation site (N-linked (GlcNAc...) asparagine). The chain crosses the membrane as a helical span at residues 962–982 (TLLIPPTTLLIVNLVGVVAGV). Residues 983-993 (SYAINSGYQSW) are Cytoplasmic-facing. The helical transmembrane segment at 994-1014 (GPLFGKLFFAFWVIVHLYPFL) threads the bilayer. The Extracellular portion of the chain corresponds to 1015-1023 (KGLMGRQNR). Residues 1024–1044 (TPTIVVVWSVLLASIFSLLWV) traverse the membrane as a helical segment. Over 1045–1065 (RIDPFTSRVTGPDILECGINC) the chain is Cytoplasmic.

It belongs to the glycosyltransferase 2 family. Plant cellulose synthase subfamily. Homodimer. Interacts with CESA1 and CESA6. Interacts with STL1 and STL2, but not with GOT1. Binds to CSI1 and CSI3. Interacts with PAT24/TIP1. It depends on Zn(2+) as a cofactor. The cofactor is Mn(2+). Palmitoylated, in part by PAT24/TIP1. As to expression, expressed in young plants, flowers and roots, and to a lower extent in leaves and stems. Localized in all cells except meristematic cells. Accumulates particularly in root caps, root hairs, epidermal layer, midveins of leaves and anthers. Not present in old tissues.

The protein resides in the cell membrane. It is found in the golgi apparatus membrane. It carries out the reaction [(1-&gt;4)-beta-D-glucosyl](n) + UDP-alpha-D-glucose = [(1-&gt;4)-beta-D-glucosyl](n+1) + UDP + H(+). The protein operates within glycan metabolism; plant cellulose biosynthesis. In terms of biological role, catalytic subunit of cellulose synthase terminal complexes ('rosettes'), required for beta-1,4-glucan microfibril crystallization, a major mechanism of the cell wall formation. Involved in the primary cell wall formation, especially in roots. This chain is Cellulose synthase A catalytic subunit 3 [UDP-forming], found in Arabidopsis thaliana (Mouse-ear cress).